A 155-amino-acid chain; its full sequence is MKVIIDGDACPVKNILFNICEHHDLELILVHSIAHMSKGEQKIETIIVDNEAEAADIMIMNRTKAGDLVITADTGLAALVLGKRAFVLSPWGHFYTNDNIGSLLDRRYLNRKMMLQGGRVKGPKKRNKEDDHRFQQALESFLEKHLRNSSKQEGV.

Belongs to the UPF0178 family.

This is UPF0178 protein Amet_2995 from Alkaliphilus metalliredigens (strain QYMF).